Reading from the N-terminus, the 257-residue chain is Imidazole glycerol phosphate synthase subunit HisF (257 aa).

Residues Asp11 and Asp130 contribute to the active site.

This sequence belongs to the HisA/HisF family. In terms of assembly, heterodimer of HisH and HisF.

It localises to the cytoplasm. It catalyses the reaction 5-[(5-phospho-1-deoxy-D-ribulos-1-ylimino)methylamino]-1-(5-phospho-beta-D-ribosyl)imidazole-4-carboxamide + L-glutamine = D-erythro-1-(imidazol-4-yl)glycerol 3-phosphate + 5-amino-1-(5-phospho-beta-D-ribosyl)imidazole-4-carboxamide + L-glutamate + H(+). It functions in the pathway amino-acid biosynthesis; L-histidine biosynthesis; L-histidine from 5-phospho-alpha-D-ribose 1-diphosphate: step 5/9. In terms of biological role, IGPS catalyzes the conversion of PRFAR and glutamine to IGP, AICAR and glutamate. The HisF subunit catalyzes the cyclization activity that produces IGP and AICAR from PRFAR using the ammonia provided by the HisH subunit. In Francisella philomiragia subsp. philomiragia (strain ATCC 25017 / CCUG 19701 / FSC 153 / O#319-036), this protein is Imidazole glycerol phosphate synthase subunit HisF.